The following is a 131-amino-acid chain: Lysosomal enzyme trafficking factor (131 aa).

Helical transmembrane passes span 8-28 (MGWI…YYVF) and 66-86 (LPFW…FLFL).

Belongs to the LYSET family.

It localises to the golgi apparatus membrane. Required for mannose-6-phosphate-dependent trafficking of lysosomal enzymes. LYSET bridges GlcNAc-1-phosphate transferase (GNPTAB), to the membrane-bound transcription factor site-1 protease (MBTPS1), thus allowing proteolytic activation of the GNPTAB. GNPTAB is involved in the regulation of M6P-dependent Golgi-to-lysosome trafficking of lysosomal enzymes. LYSET is thus an essential factor for maturation and delivery of lysosomal hydrolases. The protein is Lysosomal enzyme trafficking factor (lyset-a) of Xenopus laevis (African clawed frog).